The sequence spans 183 residues: Type II secretion system protein H (183 aa).

Residues 1 to 8 constitute a propeptide, leader sequence; sequence MRRHRQSG. Phe9 is modified (N-methylphenylalanine). A helical transmembrane segment spans residues 9–28; the sequence is FTLLEVLLVAMLMGLVATAV.

It belongs to the GSP H family. In terms of assembly, type II secretion is composed of four main components: the outer membrane complex, the inner membrane complex, the cytoplasmic secretion ATPase and the periplasm-spanning pseudopilus. Interacts with core component ExeG. In terms of processing, cleaved by prepilin peptidase. Methylated by prepilin peptidase at the amino group of the N-terminal phenylalanine once the leader sequence is cleaved by prepilin peptidase.

The protein resides in the cell inner membrane. Its function is as follows. Component of the type II secretion system required for the energy-dependent secretion of extracellular factors such as proteases and toxins from the periplasm. Part of the pseudopilus tip complex that is critical for the recognition and binding of secretion substrates. The chain is Type II secretion system protein H (exeH) from Aeromonas hydrophila.